The primary structure comprises 580 residues: MTAVAPRVDGHVAPQRPEPTGHARKGSKAWLMMTTTDHKQLGIMYIIMSFSFFFLGGLMALLIRAELFTPGLQFLSNEQFNQLFTMHGTVMLLLYGTPIVWGFANYVLPLQIGAPDVAFPRLNAFGFWITTVGGVAMLAGFLTPGGAADFGWTMYSPLSDSIHSPGIGSDMWIIGVGATGIGSVASAINMLTTILCLRAPGMTMFRMPVFTWNIFVTSVLALLIFPLLLAAALGVLYDRKLGGHIYDPANGGSILWQHLFWFFGHPEVYVLALPFFGIISEIIPVFSRKPMFGYIGLVFATLSIGALSMAVWAHHMFVTGAVLLPFFSFMTFLISVPTGVKFFNWVGTMWKGHITWETPMIWAVGFMSTFLFGGLTGIMLASPPLDFHLSDSYFLIAHFHYTLFGTVVFASCAGVYFWFPKMTGRMMDERLGKIHFWLTFVGFHGTFMVQHWLGNMGMPRRYADYLDSDGFTTLNQISTIFSFLLGLSVIPFVWNVFKSWRYGELVTVDDPWGYGNSLEWATSCPPPRHNFTSLPRIRSERPAFELHYPHMIERMRREAHVGEHDLRAETTQSPTPAEVR.

A disordered region spans residues 1–25 (MTAVAPRVDGHVAPQRPEPTGHARK). The chain crosses the membrane as a helical span at residues 43–63 (IMYIIMSFSFFFLGGLMALLI). H87 provides a ligand contact to Fe(II)-heme a. 6 helical membrane-spanning segments follow: residues 90–110 (VMLLLYGTPIVWGFANYVLPL), 122–142 (LNAFGFWITTVGGVAMLAGFL), 171–191 (MWIIGVGATGIGSVASAINML), 214–234 (IFVTSVLALLIFPLLLAAALG), 259–279 (LFWFFGHPEVYVLALPFFGII), and 292–312 (FGYIGLVFATLSIGALSMAVW). Residues H265 and Y269 each contribute to the Cu cation site. The 1'-histidyl-3'-tyrosine (His-Tyr) cross-link spans 265–269 (HPEVY). Cu cation contacts are provided by H314 and H315. Helical transmembrane passes span 316 to 336 (MFVTGAVLLPFFSFMTFLISV) and 360 to 380 (MIWAVGFMSTFLFGGLTGIML). H398 contacts heme a3. The next 3 helical transmembrane spans lie at 399 to 419 (FHYTLFGTVVFASCAGVYFWF), 434 to 454 (IHFWLTFVGFHGTFMVQHWLG), and 477 to 497 (ISTIFSFLLGLSVIPFVWNVF). Residue H400 participates in Fe(II)-heme a binding.

Belongs to the heme-copper respiratory oxidase family. In terms of assembly, associates with subunits II, III and IV to form cytochrome c oxidase. Cu(2+) serves as cofactor. Heme is required as a cofactor.

Its subcellular location is the cell membrane. The enzyme catalyses 4 Fe(II)-[cytochrome c] + O2 + 8 H(+)(in) = 4 Fe(III)-[cytochrome c] + 2 H2O + 4 H(+)(out). It participates in energy metabolism; oxidative phosphorylation. Its function is as follows. Cytochrome c oxidase is the component of the respiratory chain that catalyzes the reduction of oxygen to water. Subunits 1-3 form the functional core of the enzyme complex. CO I is the catalytic subunit of the enzyme. Electrons originating in cytochrome c are transferred via the copper A center of subunit 2 and heme A of subunit 1 to the bimetallic center formed by heme A3 and copper B. This is Cytochrome c oxidase subunit 1 (ctaD) from Corynebacterium efficiens (strain DSM 44549 / YS-314 / AJ 12310 / JCM 11189 / NBRC 100395).